Here is a 988-residue protein sequence, read N- to C-terminus: RecQ-like DNA helicase blm-1 (988 aa).

The disordered stretch occupies residues 46–119; the sequence is CEEREEEYID…QFPSRPQKRL (74 aa). 2 repeat units span residues 121–129 and 130–138. Residues 121–138 form a 2 X 9 AA tandem repeats of [DE]-P-P-I-V-D-L-D-[ED] region; that stretch reads DPPIVDLDEEPPIVDLDD. A disordered region spans residues 148–185; sequence TSEEVVSGDIAPEEEEEEGHDSFDDFESVPAQPPSKNT. Residues 158–174 are compositionally biased toward acidic residues; that stretch reads APEEEEEEGHDSFDDFE. Residues 248-252 and 272-276 each bind ATP; these read FRHRQ and GAGKS. One can recognise a Helicase ATP-binding domain in the interval 256-433; the sequence is ILSTLMGHDT…RDHLKMQNSK (178 aa). A DEAH box motif is present at residues 375–378; sequence DEAH. Residues 458–603 form the Helicase C-terminal domain; the sequence is NVVEKMKQLY…VRSMHLNNVL (146 aa). Residues 478–480 are 3' overhang DNA-binding; that stretch reads SRK. R562 serves as a coordination point for ATP. The 3' overhang DNA-binding stretch occupies residues 580 to 583; that stretch reads RLRR. C615, C633, C640, and C643 together coordinate Zn(2+). 3' overhang DNA-binding regions lie at residues 676–678, 687–691, and 736–742; these read TLK, ALIKK, and YSVPNQA. One can recognise an HRDC domain in the interval 807 to 888; it reads GDVFTRCLQD…ATYWKQVDER (82 aa). The segment at 930–988 is disordered; the sequence is GGGGCRGRGKKRAFSGFSSGRATKKPRATAPSARGKTSGRGGAKPATSLKRNMYPATSM. Residues 939 to 955 carry the Nuclear localization signal motif; the sequence is KKRAFSGFSSGRATKKP.

The protein belongs to the helicase family. RecQ subfamily. In terms of assembly, monomer. Homodimer (via N-terminus). Homotetramer (via N-terminus); dimer of dimers. Homohexamer (via N-terminus). Self-association negatively regulates DNA unwinding amplitude and rate. Oligomer forms dissociate into monomer in presence of ATP. Component of the BTR double Holliday Junction dissolution complex composed of at least him-6, top-3, rmh-1 and rmif-2, which is involved in double strand break repair in the germline. May interact with rmh-1; the interaction is required for mutual stability and localization at nuclear foci. Forms a complex composed of cdc-48.1, him-6 and crp-1; within the complex, interacts with cdc-48.1. The cofactor is Zn(2+).

It is found in the nucleus. The protein resides in the chromosome. The enzyme catalyses Couples ATP hydrolysis with the unwinding of duplex DNA by translocating in the 3'-5' direction.. It carries out the reaction ATP + H2O = ADP + phosphate + H(+). Component of the BTR double Holliday Junction dissolution complex, which is involved in homologous recombination during meiotic double strand break in the germline. Stabilizes and positively regulates the localization of the BTR double Holliday Junction dissolution complex component rmh-1 at nuclear foci during meiotic recombination. Participates in DNA replication and repair. Exhibits a magnesium-dependent ATP-dependent DNA-helicase activity that unwinds single- and double-stranded DNA in a 3'-5' direction. Negatively regulates sister chromatid exchange (SCE). In terms of biological role, ATP-dependent DNA helicase that unwinds single- and double-stranded DNA in a 3'-5' direction. Participates in DNA replication and repair. Negatively regulates sister chromatid exchange (SCE). Stimulates DNA 4-way junction branch migration and DNA Holliday junction dissolution. Binds single-stranded DNA (ssDNA), forked duplex DNA and DNA Holliday junction. This chain is RecQ-like DNA helicase blm-1, found in Caenorhabditis elegans.